A 486-amino-acid polypeptide reads, in one-letter code: Acetyl-coenzyme A carboxylase carboxyl transferase subunit beta, chloroplastic (486 aa).

In terms of domain architecture, CoA carboxyltransferase N-terminal spans 224 to 486; that stretch reads LWVQCENCYG…FQFHGFFPRP (263 aa). Residues Cys228, Cys231, Cys247, and Cys250 each coordinate Zn(2+). The C4-type zinc finger occupies 228–250; the sequence is CENCYGLNYKKFFSSKMNICEQC.

This sequence belongs to the AccD/PCCB family. As to quaternary structure, acetyl-CoA carboxylase is a heterohexamer composed of biotin carboxyl carrier protein, biotin carboxylase and 2 subunits each of ACCase subunit alpha and ACCase plastid-coded subunit beta (accD). Requires Zn(2+) as cofactor.

It localises to the plastid. The protein localises to the chloroplast stroma. It carries out the reaction N(6)-carboxybiotinyl-L-lysyl-[protein] + acetyl-CoA = N(6)-biotinyl-L-lysyl-[protein] + malonyl-CoA. Its pathway is lipid metabolism; malonyl-CoA biosynthesis; malonyl-CoA from acetyl-CoA: step 1/1. In terms of biological role, component of the acetyl coenzyme A carboxylase (ACC) complex. Biotin carboxylase (BC) catalyzes the carboxylation of biotin on its carrier protein (BCCP) and then the CO(2) group is transferred by the transcarboxylase to acetyl-CoA to form malonyl-CoA. This chain is Acetyl-coenzyme A carboxylase carboxyl transferase subunit beta, chloroplastic, found in Nymphaea alba (White water-lily).